The sequence spans 207 residues: Large ribosomal subunit protein uL4 (207 aa).

Residues 48 to 75 (THSVKNRSAVRGGGRKPWRQKGTGRARQ) form a disordered region. The span at 60–71 (GGRKPWRQKGTG) shows a compositional bias: basic residues.

The protein belongs to the universal ribosomal protein uL4 family. Part of the 50S ribosomal subunit.

Its function is as follows. One of the primary rRNA binding proteins, this protein initially binds near the 5'-end of the 23S rRNA. It is important during the early stages of 50S assembly. It makes multiple contacts with different domains of the 23S rRNA in the assembled 50S subunit and ribosome. In terms of biological role, forms part of the polypeptide exit tunnel. The polypeptide is Large ribosomal subunit protein uL4 (Staphylococcus carnosus (strain TM300)).